The sequence spans 279 residues: MPPVLRTVAELRARVSDWKAAGETVGVVPTMGALHEGHLSLARRARAACDRVIVTIFVNPRQFNNPADLEKYPRTEAQDAALLASVGVDAVFAPGPEEVYPRGFATNVSVSGVSEPLEGAHRPGHFDGVATVVAKLFGMTRADRAFFGEKDWQQLMVVQRLVADLNIPVTIEGCATVREADGLALSSRNRRLSVEGRARAPALVRAMQAAAEAMRGGRAIPEALAEARAAVLAAGFETVDYLELRTADLLLPMERLQGEGRLLAAATLDGVRLIDNIPV.

31 to 38 is a binding site for ATP; sequence MGALHEGH. His38 acts as the Proton donor in catalysis. (R)-pantoate is bound at residue Gln62. Gln62 contacts beta-alanine. 148–151 contributes to the ATP binding site; sequence GEKD. Gln154 contributes to the (R)-pantoate binding site. ATP contacts are provided by residues Val177 and 185-188; that span reads LSSR.

This sequence belongs to the pantothenate synthetase family. In terms of assembly, homodimer.

The protein localises to the cytoplasm. It catalyses the reaction (R)-pantoate + beta-alanine + ATP = (R)-pantothenate + AMP + diphosphate + H(+). The protein operates within cofactor biosynthesis; (R)-pantothenate biosynthesis; (R)-pantothenate from (R)-pantoate and beta-alanine: step 1/1. Catalyzes the condensation of pantoate with beta-alanine in an ATP-dependent reaction via a pantoyl-adenylate intermediate. The polypeptide is Pantothenate synthetase (Cereibacter sphaeroides (strain ATCC 17023 / DSM 158 / JCM 6121 / CCUG 31486 / LMG 2827 / NBRC 12203 / NCIMB 8253 / ATH 2.4.1.) (Rhodobacter sphaeroides)).